A 296-amino-acid chain; its full sequence is Putative gluconeogenesis factor (296 aa).

It belongs to the gluconeogenesis factor family.

Its subcellular location is the cytoplasm. Required for morphogenesis under gluconeogenic growth conditions. This Vibrio cholerae serotype O1 (strain ATCC 39315 / El Tor Inaba N16961) protein is Putative gluconeogenesis factor.